A 106-amino-acid chain; its full sequence is Malonate decarboxylase acyl carrier protein (106 aa).

O-(phosphoribosyl dephospho-coenzyme A)serine is present on Ser28.

This sequence belongs to the MdcC family. Post-translationally, covalently binds the prosthetic group of malonate decarboxylase.

It is found in the cytoplasm. Functionally, subunit of malonate decarboxylase, it is an acyl carrier protein to which acetyl and malonyl thioester residues are bound via a 2'-(5''-phosphoribosyl)-3'-dephospho-CoA prosthetic group and turn over during the catalytic mechanism. This Stenotrophomonas maltophilia (strain K279a) protein is Malonate decarboxylase acyl carrier protein.